We begin with the raw amino-acid sequence, 398 residues long: E3 ubiquitin-protein ligase MARCHF11 (398 aa).

The segment covering 1–14 has biased composition (basic and acidic residues); it reads MSDEGSKRGSRADS. The segment at 1–158 is disordered; the sequence is MSDEGSKRGS…GSGDQRSGHQ (158 aa). Residues 19–31 show a composition bias toward pro residues; the sequence is PPLPPPPPPPPPG. 2 stretches are compositionally biased toward basic and acidic residues: residues 94–104 and 121–130; these read EGPRRLPEVKL and ACREGERRGT. Residues 158–218 form an RING-CH-type zinc finger; that stretch reads QHQHHQPICK…ELCCYRYHVT (61 aa). Residues Cys-166, Cys-169, Cys-182, Cys-184, His-192, Cys-195, Cys-208, and Cys-211 each contribute to the Zn(2+) site. Transmembrane regions (helical) follow at residues 241–261 and 274–294; these read MIAVILGSLFLIASVTWLLWS and ILFQICYGMYGFMDLVCIGLI. The short motif at 367–370 is the YXXL motif element; sequence YVLL. The PDZ-binding signature appears at 395-398; sequence VTSV.

In terms of assembly, interacts (YXXL motif) with AP1M1. Interacts (via PDZ-binding motif) with LIN7A. Interacts with unidentified fucose glycoproteins. Predominantly expressed in testis. Present in early developing spermatids. Not present in spermatogonia, spermatocytes or somatic cells (i.e. peritubular, Leydig, and Sertoli cells). Present in early round spermatids at step 4, remains until step 11, then it decreases at steps 12-15, and diminishes after step 16 (at protein level). Also expressed at lower level in brain.

It localises to the cytoplasmic vesicle membrane. It carries out the reaction S-ubiquitinyl-[E2 ubiquitin-conjugating enzyme]-L-cysteine + [acceptor protein]-L-lysine = [E2 ubiquitin-conjugating enzyme]-L-cysteine + N(6)-ubiquitinyl-[acceptor protein]-L-lysine.. Its pathway is protein modification; protein ubiquitination. In terms of biological role, E3 ubiquitin-protein ligase that mediates polyubiquitination of CD4. E3 ubiquitin ligases accept ubiquitin from an E2 ubiquitin-conjugating enzyme in the form of a thioester and then directly transfer the ubiquitin to targeted substrates. May play a role in ubuquitin-dependent protein sorting in developmenting spermatids. The sequence is that of E3 ubiquitin-protein ligase MARCHF11 (Marchf11) from Rattus norvegicus (Rat).